A 231-amino-acid polypeptide reads, in one-letter code: NADH-ubiquinone oxidoreductase chain 4 (231 aa).

A run of 6 helical transmembrane segments spans residues 1–21 (PIAG…YGII), 34–54 (MFLP…LTCL), 63–85 (IAYS…TPWG), 89–111 (AMTL…NTTY), 128–148 (ILPM…AIPP), and 156–176 (LLIM…LGLS).

This sequence belongs to the complex I subunit 4 family.

It is found in the mitochondrion membrane. The enzyme catalyses a ubiquinone + NADH + 5 H(+)(in) = a ubiquinol + NAD(+) + 4 H(+)(out). Its function is as follows. Core subunit of the mitochondrial membrane respiratory chain NADH dehydrogenase (Complex I) that is believed to belong to the minimal assembly required for catalysis. Complex I functions in the transfer of electrons from NADH to the respiratory chain. The immediate electron acceptor for the enzyme is believed to be ubiquinone. This is NADH-ubiquinone oxidoreductase chain 4 (MT-ND4) from Gloydius intermedius (Central Asian pit viper).